The primary structure comprises 278 residues: Bifunctional protein FolD (278 aa).

Residues 165-167 (GRS), S190, and T231 each bind NADP(+).

It belongs to the tetrahydrofolate dehydrogenase/cyclohydrolase family. In terms of assembly, homodimer.

The enzyme catalyses (6R)-5,10-methylene-5,6,7,8-tetrahydrofolate + NADP(+) = (6R)-5,10-methenyltetrahydrofolate + NADPH. It catalyses the reaction (6R)-5,10-methenyltetrahydrofolate + H2O = (6R)-10-formyltetrahydrofolate + H(+). It functions in the pathway one-carbon metabolism; tetrahydrofolate interconversion. Functionally, catalyzes the oxidation of 5,10-methylenetetrahydrofolate to 5,10-methenyltetrahydrofolate and then the hydrolysis of 5,10-methenyltetrahydrofolate to 10-formyltetrahydrofolate. This is Bifunctional protein FolD from Clostridium novyi (strain NT).